The chain runs to 391 residues: Na(+)/H(+) antiporter NhaA (391 aa).

11 consecutive transmembrane segments (helical) span residues 14–34 (AGGI…NSPL), 59–79 (LLLW…GLEV), 95–115 (SLPS…YLLF), 124–144 (AGWA…MALL), 154–174 (VFLL…IALF), 177–197 (SDLS…LVGL), 213–233 (LILW…GVII), 261–281 (FLIL…NMSL), 290–310 (IGIA…FSFI), 328–348 (IAPV…IASL), and 363–383 (LGTL…LSKV).

It belongs to the NhaA Na(+)/H(+) (TC 2.A.33) antiporter family.

It localises to the cell inner membrane. It carries out the reaction Na(+)(in) + 2 H(+)(out) = Na(+)(out) + 2 H(+)(in). Its function is as follows. Na(+)/H(+) antiporter that extrudes sodium in exchange for external protons. The protein is Na(+)/H(+) antiporter NhaA of Shewanella putrefaciens (strain CN-32 / ATCC BAA-453).